A 347-amino-acid chain; its full sequence is GTP 3',8-cyclase (347 aa).

One can recognise a Radical SAM core domain in the interval 10–242; it reads RLNRPIGVLR…ERINARWPLE (233 aa). A GTP-binding site is contributed by Arg19. Residues Cys26 and Cys30 each contribute to the [4Fe-4S] cluster site. S-adenosyl-L-methionine is bound at residue Tyr32. Cys33 is a binding site for [4Fe-4S] cluster. A GTP-binding site is contributed by Arg65. S-adenosyl-L-methionine is bound at residue Gly69. Thr104 provides a ligand contact to GTP. Ser129 contributes to the S-adenosyl-L-methionine binding site. GTP is bound at residue Lys178. S-adenosyl-L-methionine is bound at residue Met212. 2 residues coordinate [4Fe-4S] cluster: Cys275 and Cys278. 280-282 is a binding site for GTP; it reads RLR. Cys292 contacts [4Fe-4S] cluster.

This sequence belongs to the radical SAM superfamily. MoaA family. As to quaternary structure, monomer and homodimer. [4Fe-4S] cluster is required as a cofactor.

It catalyses the reaction GTP + AH2 + S-adenosyl-L-methionine = (8S)-3',8-cyclo-7,8-dihydroguanosine 5'-triphosphate + 5'-deoxyadenosine + L-methionine + A + H(+). It participates in cofactor biosynthesis; molybdopterin biosynthesis. Catalyzes the cyclization of GTP to (8S)-3',8-cyclo-7,8-dihydroguanosine 5'-triphosphate. This is GTP 3',8-cyclase from Synechococcus sp. (strain CC9605).